A 389-amino-acid chain; its full sequence is Succinate--CoA ligase [ADP-forming] subunit beta (389 aa).

Residues 9–236 (KELFAKHNVP…KDATDPLELK (228 aa)) form the ATP-grasp domain. Residues K45, 52 to 54 (GRG), S94, and E99 each bind ATP. Mg(2+) is bound by residues N191 and D205. Residues N256 and 318 to 320 (GIT) contribute to the substrate site.

Belongs to the succinate/malate CoA ligase beta subunit family. Heterotetramer of two alpha and two beta subunits. Mg(2+) serves as cofactor.

The catalysed reaction is succinate + ATP + CoA = succinyl-CoA + ADP + phosphate. It carries out the reaction GTP + succinate + CoA = succinyl-CoA + GDP + phosphate. It participates in carbohydrate metabolism; tricarboxylic acid cycle; succinate from succinyl-CoA (ligase route): step 1/1. Functionally, succinyl-CoA synthetase functions in the citric acid cycle (TCA), coupling the hydrolysis of succinyl-CoA to the synthesis of either ATP or GTP and thus represents the only step of substrate-level phosphorylation in the TCA. The beta subunit provides nucleotide specificity of the enzyme and binds the substrate succinate, while the binding sites for coenzyme A and phosphate are found in the alpha subunit. The polypeptide is Succinate--CoA ligase [ADP-forming] subunit beta (Mycobacteroides abscessus (strain ATCC 19977 / DSM 44196 / CCUG 20993 / CIP 104536 / JCM 13569 / NCTC 13031 / TMC 1543 / L948) (Mycobacterium abscessus)).